The chain runs to 358 residues: Adenosine deaminase (358 aa).

Zn(2+)-binding residues include His14 and His16. Substrate-binding residues include His16, Asp18, and Gly183. A Zn(2+)-binding site is contributed by His212. Glu215 (proton donor) is an active-site residue. Position 294 (Asp294) interacts with Zn(2+). Asp295 is a substrate binding site.

It belongs to the metallo-dependent hydrolases superfamily. Adenosine and AMP deaminases family. The cofactor is Zn(2+).

It localises to the cell membrane. The protein resides in the cell junction. It is found in the cytoplasmic vesicle lumen. The protein localises to the cytoplasm. Its subcellular location is the lysosome. The catalysed reaction is adenosine + H2O + H(+) = inosine + NH4(+). The enzyme catalyses 2'-deoxyadenosine + H2O + H(+) = 2'-deoxyinosine + NH4(+). Catalyzes the hydrolytic deamination of adenosine and 2-deoxyadenosine. Plays an important role in purine metabolism and in adenosine homeostasis. Modulates signaling by extracellular adenosine, and so contributes indirectly to cellular signaling events. May act as a positive regulator of T-cell coactivation. The chain is Adenosine deaminase (ada) from Xenopus laevis (African clawed frog).